The primary structure comprises 323 residues: Mitochondrial glutamate carrier 1 (323 aa).

3 Solcar repeats span residues 6-93 (ISLP…FRHQ), 101-214 (LTLL…LNQL), and 223-312 (SPFY…GIAE). 6 consecutive transmembrane segments (helical) span residues 12–32 (LINGGIAGLIGVTCVFPIDLA), 62–82 (YFGMYRGAAVNLTLVTPEKAI), 107–127 (MLAGCGAGTCQVIVTTPMEML), 189–209 (GLGATLLRDVPFSVVYFPLFA), 223–243 (SPFYVSFLAGCVAGSAAAVAV), and 292–312 (ALVIAPLFGIAQVVYFLGIAE).

The protein belongs to the mitochondrial carrier (TC 2.A.29) family. In terms of tissue distribution, expressed at high levels in brain, liver, and pancreas.

It localises to the mitochondrion inner membrane. It carries out the reaction L-glutamate(in) + H(+)(in) = L-glutamate(out) + H(+)(out). Mitochondrial glutamate/H(+) symporter. Responsible for the transport of glutamate from the cytosol into the mitochondrial matrix with the concomitant import of a proton. Plays a role in the control of glucose-stimulated insulin secretion. The polypeptide is Mitochondrial glutamate carrier 1 (Homo sapiens (Human)).